The sequence spans 275 residues: Pyrroline-5-carboxylate reductase (275 aa).

It belongs to the pyrroline-5-carboxylate reductase family.

It is found in the cytoplasm. The enzyme catalyses L-proline + NADP(+) = (S)-1-pyrroline-5-carboxylate + NADPH + 2 H(+). It carries out the reaction L-proline + NAD(+) = (S)-1-pyrroline-5-carboxylate + NADH + 2 H(+). Its pathway is amino-acid biosynthesis; L-proline biosynthesis; L-proline from L-glutamate 5-semialdehyde: step 1/1. Functionally, catalyzes the reduction of 1-pyrroline-5-carboxylate (PCA) to L-proline. This chain is Pyrroline-5-carboxylate reductase, found in Pasteurella multocida (strain Pm70).